A 298-amino-acid chain; its full sequence is Tyrosine recombinase XerC (298 aa).

The Core-binding (CB) domain maps to 2–88 (TDLHTDVERY…ALRSFFDWLV (87 aa)). Positions 109-288 (HLPKNIDVDD…DFQHLASVYD (180 aa)) constitute a Tyr recombinase domain. Residues R148, K172, H240, R243, and H266 contribute to the active site. The active-site O-(3'-phospho-DNA)-tyrosine intermediate is the Y275.

Belongs to the 'phage' integrase family. XerC subfamily. As to quaternary structure, forms a cyclic heterotetrameric complex composed of two molecules of XerC and two molecules of XerD, in which XerC interacts with XerD via its C-terminal region, XerD interacts with XerC via its C-terminal region and so on.

The protein localises to the cytoplasm. FtsK may regulate the catalytic switch between XerC and XerD in the heterotetrameric complex during the two steps of the recombination process. Site-specific tyrosine recombinase, which acts by catalyzing the cutting and rejoining of the recombining DNA molecules. Binds cooperatively to specific DNA consensus sequences that are separated from XerD binding sites by a short central region, forming the heterotetrameric XerC-XerD complex that recombines DNA substrates. The complex is essential to convert dimers of the bacterial chromosome into monomers to permit their segregation at cell division. It also contributes to the segregational stability of plasmids. In the complex XerC specifically exchanges the top DNA strands. This is Tyrosine recombinase XerC from Escherichia coli O45:K1 (strain S88 / ExPEC).